Here is a 252-residue protein sequence, read N- to C-terminus: Imidazole glycerol phosphate synthase subunit HisF (252 aa).

Active-site residues include aspartate 11 and aspartate 130.

It belongs to the HisA/HisF family. In terms of assembly, heterodimer of HisH and HisF.

Its subcellular location is the cytoplasm. The enzyme catalyses 5-[(5-phospho-1-deoxy-D-ribulos-1-ylimino)methylamino]-1-(5-phospho-beta-D-ribosyl)imidazole-4-carboxamide + L-glutamine = D-erythro-1-(imidazol-4-yl)glycerol 3-phosphate + 5-amino-1-(5-phospho-beta-D-ribosyl)imidazole-4-carboxamide + L-glutamate + H(+). It functions in the pathway amino-acid biosynthesis; L-histidine biosynthesis; L-histidine from 5-phospho-alpha-D-ribose 1-diphosphate: step 5/9. Functionally, IGPS catalyzes the conversion of PRFAR and glutamine to IGP, AICAR and glutamate. The HisF subunit catalyzes the cyclization activity that produces IGP and AICAR from PRFAR using the ammonia provided by the HisH subunit. The sequence is that of Imidazole glycerol phosphate synthase subunit HisF from Bacillus cereus (strain G9842).